The following is a 1143-amino-acid chain: Disease resistance protein Pik-1 (1143 aa).

The structured coiled coil (CC) domain stretch occupies residues 1–190 (MEAAAMAVTA…PLRIMGGEMQ (190 aa)). Residues 189 to 258 (MQKIVFKIPM…KVGHAELLQV (70 aa)) enclose the HMA domain. The segment at 191–264 (KIVFKIPMVD…LLQVSQVKED (74 aa)) is HMA-like domain. In terms of domain architecture, NB-ARC spans 282-570 (HEVKTICILG…WIAEGFVSEE (289 aa)). 10 LRR repeats span residues 681 to 706 (FKRL…ICEQ), 708 to 731 (SLRV…MRKL), 732 to 754 (KHLE…IGEL), 756 to 777 (HLRI…IREL), 778 to 800 (QHLH…VGKL), 802 to 823 (NLKI…IGEL), 824 to 848 (NHLQ…QISQ), 945 to 968 (MPNL…INGT), 979 to 1002 (DSRL…EFKF), and 1004 to 1027 (AGPA…VFRC).

The protein belongs to the disease resistance NB-LRR family. In terms of assembly, interacts with AVR-Pik through its N-terminal part containing the HMA-like domain.

Its function is as follows. Disease resistance (R) protein that specifically recognizes the AVR-Pik effector avirulence protein from M.oryzae. Resistance proteins guard the plant against pathogens that contain an appropriate avirulence protein via an indirect interaction with this avirulence protein. That triggers a defense system including the hypersensitive response, which restricts the pathogen growth. Contribution of Pik-2 is required to recognize the effector avirulence protein AVR-Pik. This Oryza sativa subsp. japonica (Rice) protein is Disease resistance protein Pik-1.